Reading from the N-terminus, the 84-residue chain is MSSGGLLLLLGLLTLWAELTPISGHDRPTFCNLAPESGRCRAHLRRIYYNLESNKCEVFFYGGCGGNDNNFSTWDECRHTCVGK.

An N-terminal signal peptide occupies residues 1–24 (MSSGGLLLLLGLLTLWAELTPISG). In terms of domain architecture, BPTI/Kunitz inhibitor spans 31–81 (CNLAPESGRCRAHLRRIYYNLESNKCEVFFYGGCGGNDNNFSTWDECRHTC). 3 disulfides stabilise this stretch: cysteine 31–cysteine 81, cysteine 40–cysteine 64, and cysteine 56–cysteine 77.

It belongs to the venom Kunitz-type family. As to expression, expressed by the venom gland.

The protein localises to the secreted. Functionally, serine protease inhibitor that inhibits plasmin (90%) (Ki=0.19 nM), trypsin (70%), FXIa/F11 (37%) (Ki=6 nM) and FXa/F10 (20%), and prolonges the activated partial thromboplastin time. This antifibrinolytic property has been confirmed by a fibrin plate assay. Shows less antifibrinolytic activity that aprotinin. In vivo, reduces the bleeding time in a murine bleeding model, and prevents the increase of fibrin(ogen) degradation products in coagulation-stimulated mice. The polypeptide is Kunitz-type serine protease inhibitor DrKIn-II (Daboia russelii (Russel's viper)).